The sequence spans 400 residues: Nicotinate phosphoribosyltransferase (400 aa).

His-220 is modified (phosphohistidine; by autocatalysis).

This sequence belongs to the NAPRTase family. Transiently phosphorylated on a His residue during the reaction cycle. Phosphorylation strongly increases the affinity for substrates and increases the rate of nicotinate D-ribonucleotide production. Dephosphorylation regenerates the low-affinity form of the enzyme, leading to product release.

It carries out the reaction nicotinate + 5-phospho-alpha-D-ribose 1-diphosphate + ATP + H2O = nicotinate beta-D-ribonucleotide + ADP + phosphate + diphosphate. It participates in cofactor biosynthesis; NAD(+) biosynthesis; nicotinate D-ribonucleotide from nicotinate: step 1/1. Functionally, catalyzes the synthesis of beta-nicotinate D-ribonucleotide from nicotinate and 5-phospho-D-ribose 1-phosphate at the expense of ATP. The protein is Nicotinate phosphoribosyltransferase of Citrobacter koseri (strain ATCC BAA-895 / CDC 4225-83 / SGSC4696).